The sequence spans 340 residues: Phosphate carrier protein, mitochondrial (340 aa).

Residues 1 to 27 (MSVFSQLAESSKQNPFSLPVRSGNCAS) constitute a mitochondrion transit peptide. Solcar repeat units follow at residues 41-125 (KYYA…FKNV), 138-222 (YRTS…TVEA), and 239-317 (EQLV…VKVA). The next 6 helical transmembrane spans lie at 47–67 (ALGG…LDLV), 95–114 (RALV…QGLG), 141–161 (SLYL…LAPM), 200–220 (PLWM…EKTV), 241–261 (LVVT…VSHP), and 297–317 (IIMI…VKVA).

This sequence belongs to the mitochondrial carrier (TC 2.A.29) family.

Its subcellular location is the mitochondrion inner membrane. Functionally, transport of phosphate groups from the cytosol to the mitochondrial matrix. The protein is Phosphate carrier protein, mitochondrial of Caenorhabditis elegans.